The chain runs to 498 residues: Lysine--tRNA ligase (498 aa).

The Mg(2+) site is built by E407 and E414.

Belongs to the class-II aminoacyl-tRNA synthetase family. In terms of assembly, homodimer. Mg(2+) serves as cofactor.

The protein resides in the cytoplasm. It catalyses the reaction tRNA(Lys) + L-lysine + ATP = L-lysyl-tRNA(Lys) + AMP + diphosphate. This Rhizobium etli (strain CIAT 652) protein is Lysine--tRNA ligase.